The primary structure comprises 762 residues: cGMP-dependent protein kinase 2 (762 aa).

The interval 1–26 (MGNGSVKPKHAKHPDGHSGNLSNEAL) is disordered. Glycine 2 carries the N-myristoyl glycine lipid modification. Serine 110 and serine 117 each carry phosphoserine. The tract at residues 118-138 (RRGAKAGVSAEPTTRTYDLNK) is disordered. The tract at residues 168 to 283 (FLKRLDPQQI…DEEYRNFLRS (116 aa)) is cGMP-binding, high affinity; cAMP-binding, moderate affinity. Residues 232 to 235 (GELA), 242 to 243 (RT), lysine 347, 356 to 359 (GEKA), 366 to 367 (RS), aspartate 412, and arginine 415 each bind 3',5'-cyclic GMP. The tract at residues 286-416 (LLKNLPEDKL…TLNRDDEKRH (131 aa)) is cGMP-binding, high affinity; cAMP-binding, low affinity. The residue at position 431 (serine 431) is a Phosphoserine. The Protein kinase domain maps to 453-711 (LEIIATLGVG…INDIKKHRWL (259 aa)). ATP-binding positions include 459–467 (LGVGGFGRV) and lysine 482. Aspartate 576 acts as the Proton acceptor in catalysis. Residue threonine 609 is modified to Phosphothreonine. The region spanning 712–762 (NGFNWEGLKARSLPSPLRRELSGPIDHSYFDKYPPEKGVPPDEMSGWDKDF) is the AGC-kinase C-terminal domain. Residues 740–762 (YFDKYPPEKGVPPDEMSGWDKDF) form a disordered region.

Belongs to the protein kinase superfamily. AGC Ser/Thr protein kinase family. cGMP subfamily. As to quaternary structure, interacts with GRIA1/GLUR1. Post-translationally, myristoylation mediates membrane localization.

The protein resides in the apical cell membrane. It is found in the cell membrane. It carries out the reaction L-seryl-[protein] + ATP = O-phospho-L-seryl-[protein] + ADP + H(+). It catalyses the reaction L-threonyl-[protein] + ATP = O-phospho-L-threonyl-[protein] + ADP + H(+). Binding of cGMP results in enzyme activation. Crucial regulator of intestinal secretion and bone growth. Phosphorylates and activates CFTR on the plasma membrane. Plays a key role in intestinal secretion by regulating cGMP-dependent translocation of CFTR in jejunum. Acts downstream of NMDAR to activate the plasma membrane accumulation of GRIA1/GLUR1 in synapse and increase synaptic plasticity. Phosphorylates GRIA1/GLUR1 at Ser-863. Acts as a regulator of gene expression and activator of the extracellular signal-regulated kinases MAPK3/ERK1 and MAPK1/ERK2 in mechanically stimulated osteoblasts. Under fluid shear stress, mediates ERK activation and subsequent induction of FOS, FOSL1/FRA1, FOSL2/FRA2 and FOSB that play a key role in the osteoblast anabolic response to mechanical stimulation. In Mus musculus (Mouse), this protein is cGMP-dependent protein kinase 2 (Prkg2).